Consider the following 350-residue polypeptide: Homeobox-leucine zipper protein HOX5 (350 aa).

The segment at residues alanine 83–glutamine 142 is a DNA-binding region (homeobox). The tract at residues lysine 141–lysine 185 is leucine-zipper. The segment at glutamate 180–alanine 254 is disordered. The segment covering serine 188–alanine 198 has biased composition (low complexity).

Belongs to the HD-ZIP homeobox family. Class I subfamily. In terms of assembly, homodimer. May form a heterodimer with HOX4. As to expression, expressed in seedlings, roots, leaves, nodes, internodes, flowers and embryo.

It localises to the nucleus. Its function is as follows. Probable transcription activator that binds to the DNA sequence 5'-CAAT[AT]ATTG-3'. The sequence is that of Homeobox-leucine zipper protein HOX5 (HOX5) from Oryza sativa subsp. indica (Rice).